The following is a 145-amino-acid chain: Heat shock protein hsp-16.2 (145 aa).

A sHSP domain is found at 32–137 (VCRISPSESS…QGRSIPIQQA (106 aa)).

This sequence belongs to the small heat shock protein (HSP20) family.

The chain is Heat shock protein hsp-16.2 from Caenorhabditis elegans.